Reading from the N-terminus, the 251-residue chain is Carbohydrate deacetylase (251 aa).

Residues His-59 and His-122 each coordinate Mg(2+).

The protein belongs to the YdjC deacetylase family. As to quaternary structure, homodimer. Mg(2+) is required as a cofactor.

Its function is as follows. Probably catalyzes the deacetylation of acetylated carbohydrates an important step in the degradation of oligosaccharides. The sequence is that of Carbohydrate deacetylase from Vibrio campbellii (strain ATCC BAA-1116).